A 261-amino-acid chain; its full sequence is tRNA pseudouridine synthase A (261 aa).

Residue Asp-51 is the Nucleophile of the active site. Tyr-109 lines the substrate pocket.

The protein belongs to the tRNA pseudouridine synthase TruA family. In terms of assembly, homodimer.

The catalysed reaction is uridine(38/39/40) in tRNA = pseudouridine(38/39/40) in tRNA. In terms of biological role, formation of pseudouridine at positions 38, 39 and 40 in the anticodon stem and loop of transfer RNAs. In Idiomarina loihiensis (strain ATCC BAA-735 / DSM 15497 / L2-TR), this protein is tRNA pseudouridine synthase A.